Consider the following 205-residue polypeptide: Probable GTP-binding protein EngB (205 aa).

Positions 22–196 (NLPEVAFVGR…LKVLDEFIHK (175 aa)) constitute an EngB-type G domain. GTP is bound by residues 30-37 (GRSNVGKS), 57-61 (GRTQL), 76-79 (DLPG), 143-146 (TKVD), and 175-177 (FSA). Mg(2+) is bound by residues Ser-37 and Thr-59.

It belongs to the TRAFAC class TrmE-Era-EngA-EngB-Septin-like GTPase superfamily. EngB GTPase family. The cofactor is Mg(2+).

Functionally, necessary for normal cell division and for the maintenance of normal septation. This chain is Probable GTP-binding protein EngB, found in Desulforamulus reducens (strain ATCC BAA-1160 / DSM 100696 / MI-1) (Desulfotomaculum reducens).